Consider the following 193-residue polypeptide: Rho-related protein racF1 (193 aa).

Position 10-17 (10-17 (GDGAVGKT)) interacts with GTP. The Effector region signature appears at 32 to 40 (YIPTVFDNY). GTP is bound by residues 57–61 (DTAGQ) and 115–118 (TKQD). Cysteine 190 is modified (cysteine methyl ester). A lipid anchor (S-geranylgeranyl cysteine) is attached at cysteine 190. Positions 191–193 (TIM) are cleaved as a propeptide — removed in mature form.

It belongs to the small GTPase superfamily. Rho family. In terms of assembly, interacts with pakB.

It localises to the membrane. Its function is as follows. Might act in concert and/or share functions with other members of the RHO family in the regulation of a subset of cytoskeletal rearrangements that are required for these processes. This chain is Rho-related protein racF1 (racF1), found in Dictyostelium discoideum (Social amoeba).